The primary structure comprises 387 residues: Phosphoglycerate kinase (387 aa).

Residues 21 to 23 (DLN), Arg-36, 59 to 62 (HLGR), Arg-113, and Arg-146 contribute to the substrate site. Residues Lys-197, Glu-314, and 340-343 (GGDT) contribute to the ATP site.

This sequence belongs to the phosphoglycerate kinase family. In terms of assembly, monomer.

The protein localises to the cytoplasm. It carries out the reaction (2R)-3-phosphoglycerate + ATP = (2R)-3-phospho-glyceroyl phosphate + ADP. It functions in the pathway carbohydrate degradation; glycolysis; pyruvate from D-glyceraldehyde 3-phosphate: step 2/5. The polypeptide is Phosphoglycerate kinase (Pseudomonas putida (strain GB-1)).